The chain runs to 206 residues: Small ribosomal subunit protein uS4 (206 aa).

Positions 96-157 (GRLDNVVYRM…KAKKQSRVRA (62 aa)) constitute an S4 RNA-binding domain.

The protein belongs to the universal ribosomal protein uS4 family. As to quaternary structure, part of the 30S ribosomal subunit. Contacts protein S5. The interaction surface between S4 and S5 is involved in control of translational fidelity.

In terms of biological role, one of the primary rRNA binding proteins, it binds directly to 16S rRNA where it nucleates assembly of the body of the 30S subunit. Its function is as follows. With S5 and S12 plays an important role in translational accuracy. The protein is Small ribosomal subunit protein uS4 of Sodalis glossinidius (strain morsitans).